The sequence spans 81 residues: Large ribosomal subunit protein bL31B (81 aa).

It belongs to the bacterial ribosomal protein bL31 family. Type B subfamily. In terms of assembly, part of the 50S ribosomal subunit.

The polypeptide is Large ribosomal subunit protein bL31B (Halalkalibacterium halodurans (strain ATCC BAA-125 / DSM 18197 / FERM 7344 / JCM 9153 / C-125) (Bacillus halodurans)).